The sequence spans 208 residues: Riboflavin synthase (208 aa).

Lumazine-binding repeat units follow at residues 1 to 97 and 98 to 195; these read MFTG…MGGH and IISG…VDTT. 2,4-dihydroxypteridine contacts are provided by residues 4–6, 48–50, 62–67, 101–103, Lys-137, 146–148, and 160–165; these read GIV, CLT, DIMKIT, GHI, SLT, and SIIPET.

Homotrimer.

It carries out the reaction 2 6,7-dimethyl-8-(1-D-ribityl)lumazine + H(+) = 5-amino-6-(D-ribitylamino)uracil + riboflavin. It participates in cofactor biosynthesis; riboflavin biosynthesis; riboflavin from 2-hydroxy-3-oxobutyl phosphate and 5-amino-6-(D-ribitylamino)uracil: step 2/2. Functionally, catalyzes the dismutation of two molecules of 6,7-dimethyl-8-ribityllumazine, resulting in the formation of riboflavin and 5-amino-6-(D-ribitylamino)uracil. The sequence is that of Riboflavin synthase (ribE) from Buchnera aphidicola subsp. Schizaphis graminum (strain Sg).